The chain runs to 709 residues: MALDVLNDLNQIRNIGIMAHIDAGKTTTTERILFYTGKNYKIGETHDGASTMDFMAQEQERGITIQSAATTCFWNRQTHDEKQKFQINIIDTPGHVDFTAEVERSLRVLDGAVAVFDGKEGVEPQSETVWRQADKYGVPRICFINKMDKLGADFYYSVDTIKTKLGATPLVVQLPIGAENDFAGVVDLIRMKAYVWNDVSGDLGAHYDTTDIPADLQDKAEQYRSELLDQVAESDEELLEKYLESGELTEDEIRAGIRKLTINREAYPVLCGSAFKDKGVQPMLDAVVDYLPSPEDVPSIVGFDPQDESIEIDRKPTTDDPFSALVFKISTHPFYGKLVFVRVYSGSVKPGDTVLDSTKEKKERVGKIFQMHADKENPVDAAEAGNIYTFVGLKNVTTGDTLCDEKSPISLESMTFPDPVIEVAVEPKTKADQEKMSIALAKLSDEDPTFQVKTDEESGQTLISGMGELQLDIIVDRMRREFKVECNVGNPQVAYRETIRKAVMNQEYTHKKQTGGSGQFAKVLMNFEPLDTENGETYEFVNEVTGGHITKEFIPSIDAGVQEAMESGILAGFPVVGVKATVTDGQVHDVDSSEMAFKIAGSMCFKEAAPKAKPVILEPIMAVEVRTPEEYMGDVMGDINARRGSIQSMTDSTGVKVIDAKVPLSEMFGYIGDLRSKTQGRAMFTMQMDSYAEVPKNVSEEIIKAQRGE.

In terms of domain architecture, tr-type G spans 10–295; sequence NQIRNIGIMA…AVVDYLPSPE (286 aa). GTP-binding positions include 19 to 26, 91 to 95, and 145 to 148; these read AHIDAGKT, DTPGH, and NKMD.

It belongs to the TRAFAC class translation factor GTPase superfamily. Classic translation factor GTPase family. EF-G/EF-2 subfamily.

Its subcellular location is the cytoplasm. Its function is as follows. Catalyzes the GTP-dependent ribosomal translocation step during translation elongation. During this step, the ribosome changes from the pre-translocational (PRE) to the post-translocational (POST) state as the newly formed A-site-bound peptidyl-tRNA and P-site-bound deacylated tRNA move to the P and E sites, respectively. Catalyzes the coordinated movement of the two tRNA molecules, the mRNA and conformational changes in the ribosome. This Bifidobacterium adolescentis (strain ATCC 15703 / DSM 20083 / NCTC 11814 / E194a) protein is Elongation factor G.